The sequence spans 929 residues: von Willebrand factor C and EGF domain-containing protein (929 aa).

The signal sequence occupies residues Met-1–Ala-21. One can recognise an EGF-like 1 domain in the interval Leu-70–Pro-98. Residues Asp-142–Gln-180 enclose the EGF-like 2; calcium-binding domain. Intrachain disulfides connect Cys-146-Cys-155, Cys-151-Cys-164, Cys-166-Cys-179, Cys-185-Cys-194, Cys-190-Cys-203, Cys-205-Cys-218, Cys-224-Cys-237, Cys-233-Cys-246, and Cys-248-Cys-261. Residues Asp-181–Ile-219 form the EGF-like 3; calcium-binding domain. The 43-residue stretch at Asp-220 to Glu-262 folds into the EGF-like 4; calcium-binding domain. Disordered stretches follow at residues Ala-291–Ser-317 and Pro-339–Gly-374. Residues Pro-339–Leu-353 are compositionally biased toward low complexity. VWFC domains lie at Ser-376–Thr-433, Thr-433–Tyr-494, Gly-491–Arg-552, Thr-558–Ser-618, Ala-619–His-677, and His-677–Ser-762. Asn-454 and Asn-464 each carry an N-linked (GlcNAc...) asparagine glycan. Residues Pro-731–Arg-774 are disordered. The segment covering Glu-743 to Thr-755 has biased composition (basic and acidic residues). A glycan (N-linked (GlcNAc...) asparagine) is linked at Asn-787. Residues Ile-791 to Pro-807 show a composition bias toward polar residues. 2 disordered regions span residues Ile-791–Phe-861 and Ala-879–Ile-929. Residues Leu-889 to Ser-903 are compositionally biased toward low complexity.

It is found in the secreted. Functionally, may be a regulatory element in the beta-catenin signaling pathway and a target for chemoprevention of hapatocellular carcinoma. This Mus musculus (Mouse) protein is von Willebrand factor C and EGF domain-containing protein (Vwce).